Reading from the N-terminus, the 71-residue chain is Vitellogenin-B2 (71 aa).

Residues 1-15 form the signal peptide; the sequence is MRGIILALLLALAGC. One can recognise a Vitellogenin domain in the interval 24-71; it reads FSESKTYVYNYEGIILNGIPENGLARSGIKLNCKVELSGYAQRSYMLK.

As to expression, produced by the liver, secreted into the blood and then sequestered by receptor mediated endocytosis into growing oocytes, where it is generally cleaved, giving rise to the respective yolk components.

Precursor of the major egg-yolk proteins that are sources of nutrients during early development of oviparous organisms. The protein is Vitellogenin-B2 of Xenopus laevis (African clawed frog).